The following is a 661-amino-acid chain: Bifunctional xylanase/xylan deacetylase (661 aa).

A signal peptide spans 1–27 (MKLPTLGKCVVRTLMGAVALGAISVNA). Residues 29 to 226 (TLSSNSTGTN…SRGSSDITVS (198 aa)) enclose the GH11 domain. Glutamate 116 functions as the Nucleophile; for endoxylanase activity in the catalytic mechanism. Glutamate 213 acts as the Proton donor; for endoxylanase activity in catalysis. Positions 220 to 259 (SSDITVSEGTSGGGTSSVGGASSSVNSSTGGGSSGGITVR) are disordered. Residues 237-247 (VGGASSSVNSS) show a composition bias toward low complexity. Residues 394–577 (SNCSGYVGIT…AKGLCPGRID (184 aa)) are polysaccharide deacetylase. Residues 398-574 (GYVGITFDDG…NLRAKGLCPG (177 aa)) enclose the NodB homology domain. The tract at residues 578–610 (PNTGRAVAPSSSGGSSSVALSSSSRSSSSAGGN) is disordered. Low complexity predominate over residues 581–608 (GRAVAPSSSGGSSSVALSSSSRSSSSAG). A CBM10 domain is found at 616 to 645 (QCNWWGTFYPLCQTQTSGWGWENSRSCIST).

This sequence in the N-terminal section; belongs to the glycosyl hydrolase 11 (cellulase G) family.

It localises to the secreted. The enzyme catalyses Endohydrolysis of (1-&gt;4)-beta-D-xylosidic linkages in xylans.. It catalyses the reaction Deacetylation of xylans and xylo-oligosaccharides.. The protein operates within glycan degradation; xylan degradation. Endo-acting xylanase which specifically cleaves internal linkages on the xylan backbone, releasing xylooligosaccharides. Is able to hydrolyze oat spelt xylan and the arabinoxylans from wheat and rye, releasing xylobiose as the major product. Also likely catalyzes, via its C-terminal domain, the removal of acetyl groups from acetylated xylan. Thus, has the capability of hydrolyzing acetylated xylan. Does not attack mannan, galactan, arabinan or any cellulosic substrates. The chain is Bifunctional xylanase/xylan deacetylase (xyn11A) from Cellvibrio japonicus (Pseudomonas fluorescens subsp. cellulosa).